Reading from the N-terminus, the 349-residue chain is Guanine nucleotide-binding protein alpha-13 subunit (349 aa).

Gly-2 is lipidated: N-myristoyl glycine. A lipid anchor (S-palmitoyl cysteine) is attached at Cys-3. One can recognise a G-alpha domain in the interval 35-349 (SHIRLLLLGS…VFKDIMKRKR (315 aa)). A G1 motif region spans residues 38 to 51 (RLLLLGSAESGKTT). GTP-binding positions include 43-50 (GSAESGKT), 177-183 (IMAYVPT), 202-206 (DIGGQ), 271-274 (NEID), and Ala-327. Positions 175-183 (DLIMAYVPT) are G2 motif. Thr-183 is a binding site for Mg(2+). The segment at 198–207 (FQLFDIGGQK) is G3 motif. The tract at residues 267–274 (YLFLNEID) is G4 motif. Positions 325–330 (CIAIDT) are G5 motif.

Belongs to the G-alpha family. G proteins are composed of 3 units; alpha, beta and gamma. The alpha chain contains the guanine nucleotide binding site.

Functionally, guanine nucleotide-binding proteins (G proteins) are involved as modulators or transducers in various transmembrane signaling systems. This is Guanine nucleotide-binding protein alpha-13 subunit from Caenorhabditis briggsae.